Reading from the N-terminus, the 420-residue chain is 4-hydroxy-3-methylbut-2-en-1-yl diphosphate synthase (flavodoxin) (420 aa).

Cys307, Cys310, Cys353, and Glu360 together coordinate [4Fe-4S] cluster.

Belongs to the IspG family. It depends on [4Fe-4S] cluster as a cofactor.

The enzyme catalyses (2E)-4-hydroxy-3-methylbut-2-enyl diphosphate + oxidized [flavodoxin] + H2O + 2 H(+) = 2-C-methyl-D-erythritol 2,4-cyclic diphosphate + reduced [flavodoxin]. It functions in the pathway isoprenoid biosynthesis; isopentenyl diphosphate biosynthesis via DXP pathway; isopentenyl diphosphate from 1-deoxy-D-xylulose 5-phosphate: step 5/6. Converts 2C-methyl-D-erythritol 2,4-cyclodiphosphate (ME-2,4cPP) into 1-hydroxy-2-methyl-2-(E)-butenyl 4-diphosphate. The polypeptide is 4-hydroxy-3-methylbut-2-en-1-yl diphosphate synthase (flavodoxin) (Brucella suis (strain ATCC 23445 / NCTC 10510)).